The primary structure comprises 212 residues: Molybdenum cofactor guanylyltransferase (212 aa).

Residues 14 to 16 (LAG), Lys-27, Asn-55, Asp-73, and Asp-108 each bind GTP. Asp-108 contributes to the Mg(2+) binding site.

This sequence belongs to the MobA family. As to quaternary structure, monomer. Mg(2+) serves as cofactor.

It is found in the cytoplasm. It carries out the reaction Mo-molybdopterin + GTP + H(+) = Mo-molybdopterin guanine dinucleotide + diphosphate. Transfers a GMP moiety from GTP to Mo-molybdopterin (Mo-MPT) cofactor (Moco or molybdenum cofactor) to form Mo-molybdopterin guanine dinucleotide (Mo-MGD) cofactor. The protein is Molybdenum cofactor guanylyltransferase of Bradyrhizobium sp. (strain ORS 278).